Here is a 393-residue protein sequence, read N- to C-terminus: MRRHLRASLWILCLATMAFSILAAVNTSPKPTLTSAFSGKAGTTAVKANKTTGELLPMVINTWNFTAANVLAWRILKQSKGGLRQTRNAVVEGCSKCEKLQCDRTVGYGGSPDELGETTLDAMVMDGATMDVGAVAGLRRIKDAIKVARHVLEHTQHTMLVGDAASAFANAMGFESESLVTPESKDMWLQWTAENCQPNFWKNVHPDPKVSCGPYKPRPTPLTRWKEDRARNEYEIGRKNHDTIGMIAIDVESNIHAGTSTNGARHKIPGRVGDSPIPGAGAYADNEVGAAVATGDGDVMMRFLPSLLAVETMRAGKPPAEAAQEGLRRILKHHKDFMGALIAVDRLGNYGAACYGLAEFPFMVSSPAGADGPTRLETVKCIGGQDKVNIVAL.

The N-terminal stretch at 1 to 23 (MRRHLRASLWILCLATMAFSILA) is a signal peptide. N-linked (GlcNAc...) asparagine glycosylation is found at N49 and N64. Intrachain disulfides connect C97/C102 and C196/C212. T243 (nucleophile) is an active-site residue. Substrate contacts are provided by residues 271–274 (RVGD) and 294–297 (TGDG). C354 and C381 are joined by a disulfide.

It belongs to the Ntn-hydrolase family. In terms of assembly, heterotetramer of two alpha and two beta chains arranged as a dimer of alpha/beta heterodimers. Cleaved into an alpha and beta chain by autocatalysis; this activates the enzyme. The N-terminal residue of the beta subunit is responsible for the nucleophile hydrolase activity.

The catalysed reaction is N(4)-(beta-N-acetyl-D-glucosaminyl)-L-asparagine + H2O = N-acetyl-beta-D-glucosaminylamine + L-aspartate + H(+). Functionally, cleaves the GlcNAc-Asn bond which joins oligosaccharides to the peptide of asparagine-linked glycoproteins. This is Putative N(4)-(beta-N-acetylglucosaminyl)-L-asparaginase CG1827 from Drosophila melanogaster (Fruit fly).